The sequence spans 1154 residues: Voltage-gated inwardly rectifying potassium channel KCNH2 (1154 aa).

Residues 1-403 lie on the Cytoplasmic side of the membrane; the sequence is MPVRRGHVAP…RIHRWTILHY (403 aa). The PAS domain maps to 41-70; it reads VIYCNDGFCELCGYSRAEVMQRPCTCDFLH. The PAC domain occupies 92 to 144; sequence RKVEIAFYRKDGSCFLCLVDVVPVKNEDGAVIMFILNFEVVMEKDMVGSPARD. The tract at residues 233 to 312 is disordered; that stretch reads ALVGSGSPPA…ASTGAMHPLR (80 aa). S239 is modified (phosphoserine). A compositionally biased stretch (polar residues) spans 258–269; sequence PDGSGSSCSLAR. S283, S284, S320, and S351 each carry phosphoserine. The helical transmembrane segment at 404-424 threads the bilayer; it reads SPFKAVWDWLILLLVIYTAVF. Residues 425–450 are Extracellular-facing; that stretch reads TPYSAAFLLKETEEGSQAPDCGYACQ. Residues 451–471 traverse the membrane as a helical segment; sequence PLAVVDLIVDIMFIVDILINF. Over 472-495 the chain is Cytoplasmic; that stretch reads RTTYVNANEEVVSHPGRIAVHYFK. Residues 496–516 form a helical membrane-spanning segment; the sequence is GWFLIDMVAAIPFDLLIFGSG. Residues 517–520 are Extracellular-facing; that stretch reads SEEL. Residues 521–541 traverse the membrane as a helical; Voltage-sensor segment; the sequence is IGLLKTARLLRLVRVARKLDR. Topologically, residues 542 to 547 are cytoplasmic; sequence YSEYGA. The chain crosses the membrane as a helical span at residues 548–568; that stretch reads AVLFLLMCTFALIAHWLACIW. Residues 569–611 lie on the Extracellular side of the membrane; the sequence is YAIGNMEQPNMDSHIGWLHNLGDQIGKPYNSSGLGGPSIKDKY. Positions 612 to 632 form an intramembrane region, pore-forming; the sequence is VTALYFTFSSLTSVGFGNVSP. The Selectivity filter signature appears at 624–629; that stretch reads SVGFGN. The Extracellular segment spans residues 633–638; sequence NTNSEK. Residues 639–659 traverse the membrane as a helical segment; the sequence is IFSICVMLIGSLMYASIFGNV. At 660–1154 the chain is on the cytoplasmic side; sequence SAIIQRLYSG…LHRHGSDPGS (495 aa). Residues 742-842 form a cNMP-binding domain region; it reads PFRGATKGCL…IHRDDLLEVL (101 aa). Residues 870–985 are disordered; that stretch reads GSPGSTELEG…DVEKSSDTCN (116 aa). Phosphoserine occurs at positions 871 and 874. Positions 883–892 are enriched in basic residues; that stretch reads RQRKRKLSFR. Residues 916–927 are compositionally biased toward gly residues; that stretch reads GPSGRGQQGGPW. Residues 928 to 939 are compositionally biased toward low complexity; that stretch reads GESLSSGPSSPE. R1014 bears the Omega-N-methylarginine mark. Positions 1037–1064 form a coiled coil; it reads RGDVESRLDALQRQLNRLETRLSADMAT. The interval 1125–1154 is disordered; it reads DGPARRLSLPGQLGALTSQPLHRHGSDPGS. Residue S1132 is modified to Phosphoserine.

The protein belongs to the potassium channel family. H (Eag) (TC 1.A.1.20) subfamily. Kv11.1/KCNH2 sub-subfamily. In terms of assembly, the potassium channel is probably composed of a homo- or heterotetrameric complex of pore-forming alpha subunits that can associate with modulating beta subunits. Interacts with DNAJB12 and DNAJB14; chaperones DNAJB12 and DNAJB14 promote tetramerization. Heteromultimer with KCNH6/ERG2 and KCNH7/ERG3. Interacts with ALG10B. Forms a stable complex with KCNE1 or KCNE2, and that this heteromultimerization regulates Inward rectifier potassium channel activity. Interacts with CANX. The core-glycosylated, but not the fully glycosylated form interacts with RNF207. Interacts with NDFIP1 and NDFIP2; this interaction decreases the cell membrane expression by targeting KCNH2, through interaction with NEDD4L, for the degradation through the multivesicular bodies (MVBs)-lysosomal pathway. Post-translationally, phosphorylated on serine and threonine residues. Phosphorylation by PKA inhibits ion conduction.

The protein localises to the cell membrane. The catalysed reaction is K(+)(in) = K(+)(out). Pore-forming (alpha) subunit of voltage-gated inwardly rectifying potassium channel. Characterized by unusual gating kinetics by producing relatively small outward currents during membrane depolarization and large inward currents during subsequent repolarization which reflect a rapid inactivation during depolarization and quick recovery from inactivation but slow deactivation (closing) during repolarization. Channel properties are modulated by cAMP and subunit assembly. Forms a stable complex with KCNE1 or KCNE2, and that this heteromultimerization regulates inward rectifier potassium channel activity. This chain is Voltage-gated inwardly rectifying potassium channel KCNH2, found in Sus scrofa (Pig).